The primary structure comprises 375 residues: 1-deoxy-D-xylulose 5-phosphate reductoisomerase (375 aa).

Residues Thr10, Gly11, Ser12, Val13, Lys37, and Asn114 each contribute to the NADPH site. A 1-deoxy-D-xylulose 5-phosphate-binding site is contributed by Lys115. Residue Glu116 participates in NADPH binding. Asp136 lines the Mn(2+) pocket. 1-deoxy-D-xylulose 5-phosphate-binding residues include Ser137, Glu138, Ser162, and His185. Glu138 serves as a coordination point for Mn(2+). Residue Gly191 participates in NADPH binding. 1-deoxy-D-xylulose 5-phosphate contacts are provided by Ser198, Asn203, Lys204, and Glu207. Glu207 contacts Mn(2+).

It belongs to the DXR family. The cofactor is Mg(2+). Requires Mn(2+) as cofactor.

It carries out the reaction 2-C-methyl-D-erythritol 4-phosphate + NADP(+) = 1-deoxy-D-xylulose 5-phosphate + NADPH + H(+). The protein operates within isoprenoid biosynthesis; isopentenyl diphosphate biosynthesis via DXP pathway; isopentenyl diphosphate from 1-deoxy-D-xylulose 5-phosphate: step 1/6. Its function is as follows. Catalyzes the NADPH-dependent rearrangement and reduction of 1-deoxy-D-xylulose-5-phosphate (DXP) to 2-C-methyl-D-erythritol 4-phosphate (MEP). This is 1-deoxy-D-xylulose 5-phosphate reductoisomerase from Sulfurihydrogenibium sp. (strain YO3AOP1).